We begin with the raw amino-acid sequence, 297 residues long: HTH-type transcriptional regulator ArgP (297 aa).

The 57-residue stretch at 4–60 folds into the HTH lysR-type domain; that stretch reads PDYRTLQALDAVIRERGFERAAQKLCITQSAVSQRIKQLENLFGQPLLVRTVPPRPT. The H-T-H motif DNA-binding region spans 21-40; it reads FERAAQKLCITQSAVSQRIK.

Belongs to the LysR transcriptional regulatory family. As to quaternary structure, homodimer.

Its function is as follows. Controls the transcription of genes involved in arginine and lysine metabolism. This chain is HTH-type transcriptional regulator ArgP, found in Serratia proteamaculans (strain 568).